The primary structure comprises 1053 residues: Sal-like protein 4 (1053 aa).

Residues 1 to 62 (MSRRKQAKPQ…DEVASEDEAT (62 aa)) form a disordered region. The segment covering 20-46 (EQQPQQQTPEFADAAPAAPAAGELGAP) has biased composition (low complexity). Residue S57 is modified to Phosphoserine. Residues 72-94 (HVCEKCCAEFFSISEFLEHKKNC) form a C2H2-type 1; atypical zinc finger. The disordered stretch occupies residues 116–149 (SGAVLSHQPTSPGSKDCHRENGGSSEDMKEKPDA). Basic and acidic residues predominate over residues 130–149 (KDCHRENGGSSEDMKEKPDA). K156 participates in a covalent cross-link: Glycyl lysine isopeptide (Lys-Gly) (interchain with G-Cter in SUMO1); alternate. Residue K156 forms a Glycyl lysine isopeptide (Lys-Gly) (interchain with G-Cter in SUMO2); alternate linkage. Residues K175, K190, and K290 each participate in a glycyl lysine isopeptide (Lys-Gly) (interchain with G-Cter in SUMO2) cross-link. S307 bears the Phosphoserine mark. A Glycyl lysine isopeptide (Lys-Gly) (interchain with G-Cter in SUMO1); alternate cross-link involves residue K316. A Glycyl lysine isopeptide (Lys-Gly) (interchain with G-Cter in SUMO2); alternate cross-link involves residue K316. A Glycyl lysine isopeptide (Lys-Gly) (interchain with G-Cter in SUMO2) cross-link involves residue K372. K374 is covalently cross-linked (Glycyl lysine isopeptide (Lys-Gly) (interchain with G-Cter in SUMO1); alternate). K374 participates in a covalent cross-link: Glycyl lysine isopeptide (Lys-Gly) (interchain with G-Cter in SUMO2); alternate. 2 consecutive C2H2-type zinc fingers follow at residues 382-404 (HKCKYCSKVFGTDSSLQIHLRSH) and 410-432 (FVCSVCGHRFTTKGNLKVHFHRH). Residue K436 forms a Glycyl lysine isopeptide (Lys-Gly) (interchain with G-Cter in SUMO2) linkage. Positions 483–496 (VGLPQNLSSGTNPK) are enriched in polar residues. The segment at 483–546 (VGLPQNLSSG…QGSGTPEPGS (64 aa)) is disordered. Position 541 is a phosphothreonine (T541). Residue K550 forms a Glycyl lysine isopeptide (Lys-Gly) (interchain with G-Cter in SUMO2) linkage. 2 consecutive C2H2-type zinc fingers follow at residues 566-588 (NECLICHRVLSCQSSLKMHYRTH) and 594-616 (FQCKICGRAFSTKGNLKTHLGVH). Residues K597 and K623 each participate in a glycyl lysine isopeptide (Lys-Gly) (interchain with G-Cter in SUMO2) cross-link. The C2H2-type 6 zinc-finger motif lies at 626–648 (HSCPICQKKFTNAVMLQQHIRMH). 3 disordered regions span residues 694–714 (EEVSSQEAPSSSSKVPTPLPS), 736–776 (VGPA…QSRS), and 788–828 (LSPA…LPST). Positions 698–708 (SQEAPSSSSKV) are enriched in low complexity. Polar residues-rich tracts occupy residues 743 to 776 (LQRQGSRENGSVESDGLTNDSSSLMGDQEYQSRS) and 788 to 797 (LSPANSQAES). Phosphoserine occurs at positions 776 and 789. Positions 810–821 (ESSENSRTEMEG) are enriched in basic and acidic residues. Residue K838 forms a Glycyl lysine isopeptide (Lys-Gly) (interchain with G-Cter in SUMO1); alternate linkage. K838 participates in a covalent cross-link: Glycyl lysine isopeptide (Lys-Gly) (interchain with G-Cter in SUMO2); alternate. At S852 the chain carries Phosphoserine. The C2H2-type 7 zinc-finger motif lies at 870–892 (HGCTRCGKNFSSASALQIHERTH). Residue K896 forms a Glycyl lysine isopeptide (Lys-Gly) (interchain with G-Cter in SUMO2) linkage. Residues 898 to 920 (FVCNICGRAFTTKGNLKVHYMTH) form a C2H2-type 8 zinc finger. Glycyl lysine isopeptide (Lys-Gly) (interchain with G-Cter in SUMO2) cross-links involve residues K932 and K947. Positions 1018–1039 (GSQSGISADVEKPSATDGVPKH) are disordered. Phosphoserine is present on S1019.

Belongs to the sal C2H2-type zinc-finger protein family. In terms of assembly, interacts with POU5F1/OCT4. Interacts with NANOG. Interacts with BEND3. Interacts with NSD2 (via PHD-type zinc fingers 1, 2 and 3). Interacts with NRBP1. Isoform SALL4B exists primarily as a ubiquitinated form. In terms of processing, sumoylation with both SUMO1 and SUMO2 regulates the stability, subcellular localization, transcriptional activity, and may reduce interaction with POU5F1/OCT4. Expressed in testis. Constitutively expressed in acute myeloid leukemia (AML).

The protein resides in the cytoplasm. Its subcellular location is the nucleus. In terms of biological role, transcription factor with a key role in the maintenance and self-renewal of embryonic and hematopoietic stem cells. The protein is Sal-like protein 4 (SALL4) of Homo sapiens (Human).